The following is an 84-amino-acid chain: Protein myomixer (84 aa).

Residues 1 to 4 (MPTP) are Cytoplasmic-facing. Residues 5–25 (LLPLLLRLLLSCLLLPAARLA) form a helical membrane-spanning segment. The Extracellular portion of the chain corresponds to 26 to 84 (RQYLLPLLRRLARRLGSQDMREALLGCLLFILSQRHSPDAGEASRVDRLERRERLGPQK). The AxLyCxL signature appears at 48 to 57 (ALLGCLLFIL). Positions 62–84 (SPDAGEASRVDRLERRERLGPQK) are disordered.

Belongs to the MYMX family. In terms of assembly, interacts with MYMK.

The protein localises to the cell membrane. Myoblast-specific protein that mediates myoblast fusion, an essential step for the formation of multi-nucleated muscle fibers. Involved in membrane fusion downstream of the lipid mixing step mediated by MYMK. Acts by generating membrane stresses via its extracellular C-terminus, leading to drive fusion pore formation. Acts independently of MYMK. Involved in skeletal muscle regeneration in response to injury by mediating the fusion of satellite cells, a population of muscle stem cells, with injured myofibers. The chain is Protein myomixer from Homo sapiens (Human).